Reading from the N-terminus, the 103-residue chain is Ubiquitin-related modifier 1 (103 aa).

At Gly-103 the chain carries 1-thioglycine. A Glycyl lysine isopeptide (Gly-Lys) (interchain with K-? in acceptor proteins) cross-link involves residue Gly-103.

It belongs to the URM1 family. C-terminal thiocarboxylation occurs in 2 steps, it is first acyl-adenylated (-COAMP) via the hesA/moeB/thiF part of UBA4, then thiocarboxylated (-COSH) via the rhodanese domain of UBA4.

Its subcellular location is the cytoplasm. It participates in tRNA modification; 5-methoxycarbonylmethyl-2-thiouridine-tRNA biosynthesis. In terms of biological role, acts as a sulfur carrier required for 2-thiolation of mcm(5)S(2)U at tRNA wobble positions of cytosolic tRNA(Lys), tRNA(Glu) and tRNA(Gln). Serves as sulfur donor in tRNA 2-thiolation reaction by being thiocarboxylated (-COSH) at its C-terminus by the MOCS3 homolog UBA4. The sulfur is then transferred to tRNA to form 2-thiolation of mcm(5)S(2)U. Prior mcm(5) tRNA modification by the elongator complex is required for 2-thiolation. Also acts as a ubiquitin-like protein (UBL) that is covalently conjugated via an isopeptide bond to lysine residues of target proteins such as AHP1. The thiocarboxylated form serves as substrate for conjugation and oxidative stress specifically induces the formation of UBL-protein conjugates. This Vanderwaltozyma polyspora (strain ATCC 22028 / DSM 70294 / BCRC 21397 / CBS 2163 / NBRC 10782 / NRRL Y-8283 / UCD 57-17) (Kluyveromyces polysporus) protein is Ubiquitin-related modifier 1.